Consider the following 490-residue polypeptide: Cobyric acid synthase (490 aa).

A GATase cobBQ-type domain is found at 252–439 (RLKVVVPVLP…LHGLFESTAA (188 aa)). The Nucleophile role is filled by Cys-333. His-431 is a catalytic residue.

It belongs to the CobB/CobQ family. CobQ subfamily.

It functions in the pathway cofactor biosynthesis; adenosylcobalamin biosynthesis. In terms of biological role, catalyzes amidations at positions B, D, E, and G on adenosylcobyrinic A,C-diamide. NH(2) groups are provided by glutamine, and one molecule of ATP is hydrogenolyzed for each amidation. The protein is Cobyric acid synthase of Pseudomonas aeruginosa (strain LESB58).